A 440-amino-acid chain; its full sequence is Enolase 1 (440 aa).

Residues H161 and E170 each contribute to the substrate site. E213 serves as the catalytic Proton donor. Positions 248, 297, and 324 each coordinate Mg(2+). E297 and D324 together coordinate substrate. The active-site Proton acceptor is K349. Substrate is bound by residues 376-379 (SHRS) and K400.

The protein belongs to the enolase family. In terms of assembly, homodimer. It depends on Mg(2+) as a cofactor.

The protein localises to the cytoplasm. It catalyses the reaction (2R)-2-phosphoglycerate = phosphoenolpyruvate + H2O. The protein operates within carbohydrate degradation; glycolysis; pyruvate from D-glyceraldehyde 3-phosphate: step 4/5. This chain is Enolase 1 (ENO1), found in Candida albicans (strain SC5314 / ATCC MYA-2876) (Yeast).